Reading from the N-terminus, the 1138-residue chain is Serine/threonine/tyrosine-interacting-like protein 2 (1138 aa).

Residues 1–20 form a disordered region; that stretch reads MATGGDAEEEQVVPNEEDEA. Residues 132–280 form the Tyrosine-protein phosphatase domain; the sequence is NEVDEVWPNV…LRELNEKLME (149 aa). The residue at position 291 (serine 291) is a Phosphoserine. Disordered stretches follow at residues 309–336, 348–473, 486–515, 552–575, 592–618, 660–694, 761–800, and 850–1117; these read EEED…VTLI, EWRK…TWDM, ARKY…DDEE, KKDS…GEKN, QKKV…AKKR, AAPS…LPNL, SGCL…VRGT, and FKKK…DEAI. A compositionally biased stretch (polar residues) spans 316-331; sequence SHLSGSSLGKASQVSK. Serine 373 is subject to Phosphoserine. Acidic residues predominate over residues 376 to 385; that stretch reads DGDDCEDEDV. Positions 386–409 are enriched in basic and acidic residues; that stretch reads ERIIQEWQSRNERYQAKGREQWNR. The residue at position 427 (threonine 427) is a Phosphothreonine. Phosphoserine occurs at positions 503 and 555. 2 stretches are compositionally biased toward basic and acidic residues: residues 552–567 and 595–614; these read KKDS…HGTE and VGSE…DTVL. Over residues 672-687 the composition is skewed to polar residues; that stretch reads SVLSTQSHRSHASNMP. Residues 773-788 show a composition bias toward low complexity; the sequence is SSDVQSVLSSTSSLTS. A compositionally biased stretch (acidic residues) spans 858 to 871; the sequence is DEDMSVGDRDEDTD. Position 862 is a phosphoserine (serine 862). Residues 878–897 are compositionally biased toward polar residues; the sequence is RYSSRSNSQKPETDASSSLA. Position 929 is a phosphoserine (serine 929). A compositionally biased stretch (low complexity) spans 936 to 947; that stretch reads SGSSRGRYTRSS. Residues 965–977 show a composition bias toward basic and acidic residues; that stretch reads RSQEQDTSFHEAN. Position 966 is a phosphoserine (serine 966). Positions 980–992 are enriched in polar residues; the sequence is TVRNTSRFSSSTT. Serine 1016 carries the phosphoserine modification. Composition is skewed to basic and acidic residues over residues 1035 to 1059 and 1074 to 1091; these read PEPR…KSDF and RSEE…EEGR. The span at 1095-1106 shows a compositional bias: polar residues; sequence GRQSQYRRSTNQ. Over residues 1107-1116 the composition is skewed to acidic residues; that stretch reads QEEEEMDDEA.

The protein belongs to the protein-tyrosine phosphatase family. Non-receptor class dual specificity subfamily.

The protein localises to the cytoplasm. It is found in the myofibril. The protein resides in the sarcomere. Its function is as follows. May be required for myofiber maturation. The polypeptide is Serine/threonine/tyrosine-interacting-like protein 2 (Styxl2) (Mus musculus (Mouse)).